Here is a 257-residue protein sequence, read N- to C-terminus: Acetylglutamate kinase (257 aa).

Substrate is bound by residues 43–44 (GG), arginine 65, and asparagine 157. Residues 180-185 (DVSGIL) and 208-210 (IIT) contribute to the ATP site.

The protein belongs to the acetylglutamate kinase family. ArgB subfamily. As to quaternary structure, homodimer.

Its subcellular location is the cytoplasm. It carries out the reaction N-acetyl-L-glutamate + ATP = N-acetyl-L-glutamyl 5-phosphate + ADP. It participates in amino-acid biosynthesis; L-arginine biosynthesis; N(2)-acetyl-L-ornithine from L-glutamate: step 2/4. In terms of biological role, catalyzes the ATP-dependent phosphorylation of N-acetyl-L-glutamate. This chain is Acetylglutamate kinase, found in Salmonella schwarzengrund (strain CVM19633).